The chain runs to 166 residues: Ureidoglycolate lyase (166 aa).

The protein belongs to the ureidoglycolate lyase family. Homodimer. Ni(2+) is required as a cofactor.

It carries out the reaction (S)-ureidoglycolate = urea + glyoxylate. The protein operates within nitrogen metabolism; (S)-allantoin degradation. Its function is as follows. Catalyzes the catabolism of the allantoin degradation intermediate (S)-ureidoglycolate, generating urea and glyoxylate. Involved in the utilization of allantoin as nitrogen source. This Agrobacterium fabrum (strain C58 / ATCC 33970) (Agrobacterium tumefaciens (strain C58)) protein is Ureidoglycolate lyase.